Consider the following 429-residue polypeptide: Asparagine--tRNA ligase (429 aa).

It belongs to the class-II aminoacyl-tRNA synthetase family.

It localises to the cytoplasm. It catalyses the reaction tRNA(Asn) + L-asparagine + ATP = L-asparaginyl-tRNA(Asn) + AMP + diphosphate + H(+). This Thermoplasma acidophilum (strain ATCC 25905 / DSM 1728 / JCM 9062 / NBRC 15155 / AMRC-C165) protein is Asparagine--tRNA ligase.